Consider the following 300-residue polypeptide: Cation-efflux pump FieF (300 aa).

Residues 24-44 (LLIKIFAWWYTGSVSILAALV) traverse the membrane as a helical segment. Asp-45 and Asp-49 together coordinate Zn(2+). Helical transmembrane passes span 82–102 (AALA…LTSI) and 114–134 (PGVG…LVTF). His-153 and Asp-157 together coordinate Zn(2+). 2 consecutive transmembrane segments (helical) span residues 156–176 (SDVM…YGWH) and 178–198 (ADAL…LRMG).

It belongs to the cation diffusion facilitator (CDF) transporter (TC 2.A.4) family. FieF subfamily. Homodimer.

It is found in the cell inner membrane. It carries out the reaction Zn(2+)(in) + H(+)(out) = Zn(2+)(out) + H(+)(in). The catalysed reaction is Cd(2+)(in) + H(+)(out) = Cd(2+)(out) + H(+)(in). It catalyses the reaction Fe(2+)(in) + H(+)(out) = Fe(2+)(out) + H(+)(in). Functionally, divalent metal cation transporter which exports Zn(2+), Cd(2+) and possibly Fe(2+). May be involved in zinc and iron detoxification by efflux. This chain is Cation-efflux pump FieF, found in Salmonella choleraesuis (strain SC-B67).